Reading from the N-terminus, the 32-residue chain is NGWNDNKNFVLFGAAAWIGLVLLVGTLYYFVV.

A helical membrane pass occupies residues 12 to 32; sequence FGAAAWIGLVLLVGTLYYFVV.

It belongs to the PsbZ family. PSII is composed of 1 copy each of membrane proteins PsbA, PsbB, PsbC, PsbD, PsbE, PsbF, PsbH, PsbI, PsbJ, PsbK, PsbL, PsbM, PsbT, PsbY, PsbZ, Psb30/Ycf12, at least 3 peripheral proteins of the oxygen-evolving complex and a large number of cofactors. It forms dimeric complexes.

The protein localises to the plastid. It is found in the chloroplast thylakoid membrane. In terms of biological role, may control the interaction of photosystem II (PSII) cores with the light-harvesting antenna, regulates electron flow through the 2 photosystem reaction centers. PSII is a light-driven water plastoquinone oxidoreductase, using light energy to abstract electrons from H(2)O, generating a proton gradient subsequently used for ATP formation. This chain is Photosystem II reaction center protein Z, found in Euglena granulata.